Consider the following 109-residue polypeptide: Fluoride-specific ion channel FluC (109 aa).

A run of 3 helical transmembrane segments spans residues 21–41, 52–72, and 84–104; these read LTLN…GFFV, ILFS…YFLY, and IIFF…GFWI.

This sequence belongs to the fluoride channel Fluc/FEX (TC 1.A.43) family.

The protein resides in the cell inner membrane. The enzyme catalyses fluoride(in) = fluoride(out). Its function is as follows. Fluoride-specific ion channel. Important for reducing fluoride concentration in the cell, thus reducing its toxicity. The polypeptide is Fluoride-specific ion channel FluC (Prochlorococcus marinus (strain MIT 9301)).